The chain runs to 44 residues: Photosystem I reaction center subunit IX (44 aa).

The chain crosses the membrane as a helical span at residues 7–27 (YLSVAPVLSTLWFGALAGLLI).

It belongs to the PsaJ family.

It localises to the plastid. It is found in the chloroplast thylakoid membrane. Its function is as follows. May help in the organization of the PsaE and PsaF subunits. The protein is Photosystem I reaction center subunit IX of Coffea arabica (Arabian coffee).